We begin with the raw amino-acid sequence, 317 residues long: Acetyl-coenzyme A carboxylase carboxyl transferase subunit alpha (317 aa).

The CoA carboxyltransferase C-terminal domain occupies 40 to 293 (LEGRVRDAMV…EAVIGDALKE (254 aa)).

This sequence belongs to the AccA family. Acetyl-CoA carboxylase is a heterohexamer composed of biotin carboxyl carrier protein (AccB), biotin carboxylase (AccC) and two subunits each of ACCase subunit alpha (AccA) and ACCase subunit beta (AccD).

Its subcellular location is the cytoplasm. It catalyses the reaction N(6)-carboxybiotinyl-L-lysyl-[protein] + acetyl-CoA = N(6)-biotinyl-L-lysyl-[protein] + malonyl-CoA. Its pathway is lipid metabolism; malonyl-CoA biosynthesis; malonyl-CoA from acetyl-CoA: step 1/1. In terms of biological role, component of the acetyl coenzyme A carboxylase (ACC) complex. First, biotin carboxylase catalyzes the carboxylation of biotin on its carrier protein (BCCP) and then the CO(2) group is transferred by the carboxyltransferase to acetyl-CoA to form malonyl-CoA. In Sinorhizobium medicae (strain WSM419) (Ensifer medicae), this protein is Acetyl-coenzyme A carboxylase carboxyl transferase subunit alpha.